The following is a 119-amino-acid chain: Small ribosomal subunit protein uS13 (119 aa).

The tract at residues 90-119 is disordered; that stretch reads IRHRRGLPLRGQRTRSNARTRKGKRKPIRS. The span at 91 to 119 shows a compositional bias: basic residues; it reads RHRRGLPLRGQRTRSNARTRKGKRKPIRS.

It belongs to the universal ribosomal protein uS13 family. Part of the 30S ribosomal subunit. Forms a loose heterodimer with protein S19. Forms two bridges to the 50S subunit in the 70S ribosome.

Located at the top of the head of the 30S subunit, it contacts several helices of the 16S rRNA. In the 70S ribosome it contacts the 23S rRNA (bridge B1a) and protein L5 of the 50S subunit (bridge B1b), connecting the 2 subunits; these bridges are implicated in subunit movement. Contacts the tRNAs in the A and P-sites. In Coxiella burnetii (strain CbuK_Q154) (Coxiella burnetii (strain Q154)), this protein is Small ribosomal subunit protein uS13.